The primary structure comprises 775 residues: tRNA(Met) cytidine acetyltransferase TmcA (775 aa).

2 disordered regions span residues 1–33 (MPTT…GMDI) and 191–215 (TVEQ…PTDA). Positions 199–212 (DPPPSRPVPSPTPP) are enriched in pro residues. Residues Gln-230, 254–263 (GRGKSSAAGL), and Arg-403 each bind ATP. The region spanning 438–623 (VEYRQLSAAD…YSVVMLDPCS (186 aa)) is the N-acetyltransferase domain. Acetyl-CoA-binding positions include 549–551 (IAT), 556–562 (RSRGLGS), and Glu-588.

Belongs to the RNA cytidine acetyltransferase family. TmcA subfamily.

It localises to the cytoplasm. The enzyme catalyses cytidine(34) in elongator tRNA(Met) + acetyl-CoA + ATP + H2O = N(4)-acetylcytidine(34) in elongator tRNA(Met) + ADP + phosphate + CoA + H(+). Its function is as follows. Catalyzes the formation of N(4)-acetylcytidine (ac(4)C) at the wobble position of tRNA(Met), by using acetyl-CoA as an acetyl donor and ATP (or GTP). The protein is tRNA(Met) cytidine acetyltransferase TmcA of Haloarcula marismortui (strain ATCC 43049 / DSM 3752 / JCM 8966 / VKM B-1809) (Halobacterium marismortui).